A 444-amino-acid chain; its full sequence is Probable D-serine dehydratase (444 aa).

The residue at position 118 (Lys118) is an N6-(pyridoxal phosphate)lysine.

It belongs to the serine/threonine dehydratase family. DsdA subfamily. It depends on pyridoxal 5'-phosphate as a cofactor.

The catalysed reaction is D-serine = pyruvate + NH4(+). In Acinetobacter baumannii (strain ATCC 17978 / DSM 105126 / CIP 53.77 / LMG 1025 / NCDC KC755 / 5377), this protein is Probable D-serine dehydratase.